Consider the following 96-residue polypeptide: MEQAPEDQGPQREPYNEWTLELLRKLKSEAVRHFPRIWLHGLGQHIYETYGDTWAGVEAIIRILQQLLFIHFRIGCRHSRIGIIQQRRSRNGSSRS.

A homooligomerization region spans residues 1 to 42 (MEQAPEDQGPQREPYNEWTLELLRKLKSEAVRHFPRIWLHGL). 3 positions are modified to phosphoserine; by host: Ser-79, Ser-94, and Ser-96.

This sequence belongs to the HIV-1 VPR protein family. As to quaternary structure, homooligomer, may form homodimer. Interacts with p6-gag region of the Pr55 Gag precursor protein through a (Leu-X-X)4 motif near the C-terminus of the P6gag protein. Interacts with host UNG. May interact with host RAD23A/HHR23A. Interacts with host VPRBP/DCAF1, leading to hijack the CUL4A-RBX1-DDB1-DCAF1/VPRBP complex, mediating ubiquitination of host proteins such as TERT and ZGPAT and arrest of the cell cycle in G2 phase. Post-translationally, phosphorylated on several residues by host. These phosphorylations regulate VPR activity for the nuclear import of the HIV-1 pre-integration complex.

It localises to the virion. The protein localises to the host nucleus. The protein resides in the host extracellular space. In terms of biological role, during virus replication, may deplete host UNG protein, and incude G2-M cell cycle arrest. Acts by targeting specific host proteins for degradation by the 26S proteasome, through association with the cellular CUL4A-DDB1 E3 ligase complex by direct interaction with host VPRPB/DCAF-1. Cell cycle arrest reportedly occurs within hours of infection and is not blocked by antiviral agents, suggesting that it is initiated by the VPR carried into the virion. Additionally, VPR induces apoptosis in a cell cycle dependent manner suggesting that these two effects are mechanistically linked. Detected in the serum and cerebrospinal fluid of AIDS patient, VPR may also induce cell death to bystander cells. During virus entry, plays a role in the transport of the viral pre-integration (PIC) complex to the host nucleus. This function is crucial for viral infection of non-dividing macrophages. May act directly at the nuclear pore complex, by binding nucleoporins phenylalanine-glycine (FG)-repeat regions. This Homo sapiens (Human) protein is Protein Vpr.